A 597-amino-acid polypeptide reads, in one-letter code: NADPH-dependent diflavin oxidoreductase 1 (597 aa).

Residues 6–150 (LLVLFGSQTG…AIDPWLQDLW (145 aa)) enclose the Flavodoxin-like domain. Residues 12–17 (SQTGTA), 59–62 (ATTG), 97–106 (LGDSSYAKFN), and aspartate 132 each bind FMN. In terms of domain architecture, FAD-binding FR-type spans 206-446 (LQPFLAPMVS…WVRSGGLTFP (241 aa)). Residues arginine 350, 382–385 (RAFS), and 416–419 (GLCS) contribute to the FAD site. NADP(+)-binding positions include threonine 460, 515-516 (SR), 521-525 (KVYVQ), and aspartate 558. Residue tryptophan 596 coordinates FAD.

This sequence belongs to the NADPH-dependent diflavin oxidoreductase NDOR1 family. In the N-terminal section; belongs to the flavodoxin family. The protein in the C-terminal section; belongs to the flavoprotein pyridine nucleotide cytochrome reductase family. In terms of assembly, interacts with CIAPIN1; as part of the cytosolic iron-sulfur (Fe-S) protein assembly (CIA) machinery. Interacts with DCPS. The cofactor is FAD. FMN serves as cofactor.

The protein resides in the cytoplasm. It localises to the perinuclear region. The enzyme catalyses 2 oxidized [2Fe-2S]-[protein] + NADPH = 2 reduced [2Fe-2S]-[protein] + NADP(+) + H(+). In terms of biological role, NADPH-dependent reductase which is a central component of the cytosolic iron-sulfur (Fe-S) protein assembly (CIA) machinery. Transfers electrons from NADPH via its FAD and FMN prosthetic groups to the [2Fe-2S] cluster of CIAPIN1, another key component of the CIA machinery. In turn, this reduced cluster provides electrons for assembly of cytosolic iron-sulfur cluster proteins. It can also reduce the [2Fe-2S] cluster of CISD1 and activate this protein implicated in Fe/S cluster repair. In vitro can fully activate methionine synthase/MTR in the presence of soluble cytochrome b5/CYB5A. This chain is NADPH-dependent diflavin oxidoreductase 1, found in Bos taurus (Bovine).